We begin with the raw amino-acid sequence, 371 residues long: Dual-specificity RNA methyltransferase RlmN (371 aa).

Glu86 acts as the Proton acceptor in catalysis. A Radical SAM core domain is found at 105–338; that stretch reads RHARYTICVS…CTIRQSKGLD (234 aa). A disulfide bridge links Cys112 with Cys343. [4Fe-4S] cluster is bound by residues Cys119, Cys123, and Cys126. S-adenosyl-L-methionine is bound by residues 169-170, Ser201, 224-226, and Asn300; these read GE and SLH. Cys343 acts as the S-methylcysteine intermediate in catalysis. Over residues 348–363 the composition is skewed to polar residues; it reads QRSQNLSPSNNNTSKP. The segment at 348–371 is disordered; the sequence is QRSQNLSPSNNNTSKPSDIKKSES.

This sequence belongs to the radical SAM superfamily. RlmN family. [4Fe-4S] cluster is required as a cofactor.

It localises to the cytoplasm. It catalyses the reaction adenosine(2503) in 23S rRNA + 2 reduced [2Fe-2S]-[ferredoxin] + 2 S-adenosyl-L-methionine = 2-methyladenosine(2503) in 23S rRNA + 5'-deoxyadenosine + L-methionine + 2 oxidized [2Fe-2S]-[ferredoxin] + S-adenosyl-L-homocysteine. The enzyme catalyses adenosine(37) in tRNA + 2 reduced [2Fe-2S]-[ferredoxin] + 2 S-adenosyl-L-methionine = 2-methyladenosine(37) in tRNA + 5'-deoxyadenosine + L-methionine + 2 oxidized [2Fe-2S]-[ferredoxin] + S-adenosyl-L-homocysteine. In terms of biological role, specifically methylates position 2 of adenine 2503 in 23S rRNA and position 2 of adenine 37 in tRNAs. m2A2503 modification seems to play a crucial role in the proofreading step occurring at the peptidyl transferase center and thus would serve to optimize ribosomal fidelity. This is Dual-specificity RNA methyltransferase RlmN from Campylobacter curvus (strain 525.92).